We begin with the raw amino-acid sequence, 818 residues long: ATM interactor (818 aa).

Residues 1–34 are compositionally biased toward low complexity; sequence MAATEAAAADSAGPAPGVPATPASTRGAAAASSP. The tract at residues 1 to 62 is disordered; sequence MAATEAAAAD…RAAAPVPPAR (62 aa). The segment at 80–105 adopts a C2H2-type 1 zinc-finger fold; sequence ILCTVRGCGKILPNSPALNMHLVKSH. The C2H2-type 2; degenerate zinc-finger motif lies at 161 to 181; the sequence is HKCSKCSNSYGTEWDLKRHEE. The segment covering 210–221 has biased composition (basic and acidic residues); sequence HEIPAEHRDPPS. Disordered stretches follow at residues 210-284 and 603-625; these read HEIP…ATPP and DNRS…GSAQ. The tract at residues 219–437 is required for formation of RAD51 foci; that stretch reads PPSKKRKMES…PDSSVSSCSQ (219 aa). Composition is skewed to polar residues over residues 229–243 and 603–612; these read YLQN…TEPL and DNRSLLSDTN.

As to quaternary structure, interacts via its C-terminus with ATM. Interacts with DYNLL; this interaction inhibits ATMIN transcriptional activity and hence may play a role in a feedback loop whereby DYNLL1 inhibits transactivation of its own promoter by ATMIN. ATMIN.

The protein resides in the nucleus. Functionally, transcription factor. Plays a crucial role in cell survival and RAD51 foci formation in response to methylating DNA damage. Involved in regulating the activity of ATM in the absence of DNA damage. May play a role in stabilizing ATM. Binds to the DYNLL1 promoter and activates its transcription. This chain is ATM interactor, found in Mus musculus (Mouse).